The primary structure comprises 156 residues: Transcription antitermination protein NusB (156 aa).

Belongs to the NusB family.

Functionally, involved in transcription antitermination. Required for transcription of ribosomal RNA (rRNA) genes. Binds specifically to the boxA antiterminator sequence of the ribosomal RNA (rrn) operons. The chain is Transcription antitermination protein NusB from Bartonella quintana (strain Toulouse) (Rochalimaea quintana).